The following is a 295-amino-acid chain: Acetyl-coenzyme A carboxylase carboxyl transferase subunit beta (295 aa).

Residues valine 25–threonine 294 enclose the CoA carboxyltransferase N-terminal domain. Zn(2+)-binding residues include cysteine 29, cysteine 32, cysteine 48, and cysteine 51. Residues cysteine 29–cysteine 51 form a C4-type zinc finger.

This sequence belongs to the AccD/PCCB family. In terms of assembly, acetyl-CoA carboxylase is a heterohexamer composed of biotin carboxyl carrier protein (AccB), biotin carboxylase (AccC) and two subunits each of ACCase subunit alpha (AccA) and ACCase subunit beta (AccD). Zn(2+) is required as a cofactor.

Its subcellular location is the cytoplasm. It catalyses the reaction N(6)-carboxybiotinyl-L-lysyl-[protein] + acetyl-CoA = N(6)-biotinyl-L-lysyl-[protein] + malonyl-CoA. It functions in the pathway lipid metabolism; malonyl-CoA biosynthesis; malonyl-CoA from acetyl-CoA: step 1/1. Functionally, component of the acetyl coenzyme A carboxylase (ACC) complex. Biotin carboxylase (BC) catalyzes the carboxylation of biotin on its carrier protein (BCCP) and then the CO(2) group is transferred by the transcarboxylase to acetyl-CoA to form malonyl-CoA. This is Acetyl-coenzyme A carboxylase carboxyl transferase subunit beta from Mannheimia succiniciproducens (strain KCTC 0769BP / MBEL55E).